Here is a 244-residue protein sequence, read N- to C-terminus: Probable transcriptional regulatory protein CHY_1525 (244 aa).

This sequence belongs to the TACO1 family.

The protein resides in the cytoplasm. The chain is Probable transcriptional regulatory protein CHY_1525 from Carboxydothermus hydrogenoformans (strain ATCC BAA-161 / DSM 6008 / Z-2901).